The sequence spans 624 residues: Probable potassium transport system protein Kup (624 aa).

Transmembrane regions (helical) follow at residues 16–36 (ALLT…SPLY), 59–79 (IISM…VMLV), 106–126 (FVAV…VITP), 147–167 (FILP…PLGT), 174–194 (FGPI…PQII), 211–231 (LIVA…LTVT), 252–272 (WFCV…ALVI), 292–312 (IPLV…VISG), 342–362 (IYMP…VLVF), 371–391 (AYGL…LIYV), 394–414 (TWWK…LLFA), and 418–438 (TKIH…IVVM).

This sequence belongs to the HAK/KUP transporter (TC 2.A.72) family.

The protein resides in the cell membrane. It carries out the reaction K(+)(in) + H(+)(in) = K(+)(out) + H(+)(out). Functionally, transport of potassium into the cell. Likely operates as a K(+):H(+) symporter. The polypeptide is Probable potassium transport system protein Kup (Corynebacterium glutamicum (strain ATCC 13032 / DSM 20300 / JCM 1318 / BCRC 11384 / CCUG 27702 / LMG 3730 / NBRC 12168 / NCIMB 10025 / NRRL B-2784 / 534)).